We begin with the raw amino-acid sequence, 869 residues long: TATA box-binding protein-associated factor RNA polymerase I subunit C (869 aa).

2 disordered regions span residues 605 to 629 (SSLRRDAGPPGDTQPDCHAPTASWT) and 729 to 869 (GAAW…RMGF). Thr-834 bears the Phosphothreonine mark. Polar residues predominate over residues 835 to 860 (PPHSQASSVRATRSQQHTPVLSSSQP). Ser-848 is modified (phosphoserine).

As to quaternary structure, component of the transcription factor SL1/TIF-IB complex, composed of TBP and at least TAF1A, TAF1B, TAF1C and TAF1D. In the complex interacts directly with TBP, TAF1A and TAF1B. Interaction of the SL1/TIF-IB subunits with TBP excludes interaction of TBP with the transcription factor IID (TFIID) subunits. Interacts with MYC and RRN3. Interacts with p53/TP53; the interaction prevents the association of SL1/TIF-IB with UBTF and represses RNA polymerase I transcription. Part of Pol I pre-initiation complex (PIC), in which Pol I core assembles with RRN3 and promoter-bound UTBF and SL1/TIF-IB complex.

It localises to the nucleus. The protein localises to the nucleolus. In terms of biological role, component of the transcription factor SL1/TIF-IB complex, which is involved in the assembly of the PIC (pre-initiation complex) during RNA polymerase I-dependent transcription. The rate of PIC formation probably is primarily dependent on the rate of association of SL1/TIF-IB with the rDNA promoter. SL1/TIF-IB is involved in stabilization of nucleolar transcription factor 1/UBTF on rDNA. Formation of SL1/TIF-IB excludes the association of TBP with TFIID subunits. Recruits RNA polymerase I to the rRNA gene promoter via interaction with RRN3. The protein is TATA box-binding protein-associated factor RNA polymerase I subunit C (TAF1C) of Homo sapiens (Human).